Consider the following 639-residue polypeptide: Kininogen-1 (639 aa).

Positions 1 to 18 (MKLITILLLCSRLLPSLA) are cleaved as a signal peptide. Residues 28–132 (CNDESLFQAV…TQICNITPGK (105 aa)) enclose the Cystatin kininogen-type 1 domain. Cystine bridges form between Cys28-Cys609, Cys83-Cys94, Cys107-Cys126, Cys142-Cys145, Cys206-Cys218, Cys229-Cys248, Cys264-Cys267, Cys328-Cys340, and Cys351-Cys370. N-linked (GlcNAc...) asparagine glycosylation occurs at Asn82. The Cystatin kininogen-type 2 domain occupies 151-254 (VDSPELGPVL…SDSCEFYPGD (104 aa)). 2 N-linked (GlcNAc...) asparagine glycosylation sites follow: Asn169 and Asn205. Positions 273–376 (VDSPELKEAL…TVKCKVLDMT (104 aa)) constitute a Cystatin kininogen-type 3 domain. N-linked (GlcNAc...) asparagine glycosylation occurs at Asn294. Residue Ser332 is modified to Phosphoserine. 2 disordered regions span residues 438-462 (NHQG…GHGH) and 476-547 (GYDH…LNPP). Basic residues predominate over residues 482-502 (PVGHGHGQRHGHGHGHGHGRD). Residues 503–519 (KHTNKDKNNVKHTDQRR) are compositionally biased toward basic and acidic residues. The segment covering 522-537 (LTSSSEDNTTSTQIQG) has biased composition (polar residues). Asn529 carries an N-linked (GlcNAc...) asparagine glycan.

In terms of processing, bradykinin is released from kininogen by plasma kallikrein. Phosphorylated by FAM20C in the extracellular medium. Post-translationally, bradykinin is inactivated by ACE, which removes the dipeptide Arg-Phe from its C-terminus. Plasma.

The protein localises to the secreted. The protein resides in the extracellular space. Its function is as follows. Kininogens are inhibitors of thiol proteases. HMW-kininogen plays an important role in blood coagulation by helping to position optimally prekallikrein and factor XI next to factor XII; HMW-kininogen inhibits the thrombin- and plasmin-induced aggregation of thrombocytes. LMW-kininogen inhibits the aggregation of thrombocytes. LMW-kininogen is in contrast to HMW-kininogen not involved in blood clotting. In terms of biological role, the active peptide bradykinin is a potent vasodilatator that is released from HMW-kininogen shows a variety of physiological effects: (A) influence in smooth muscle contraction, (B) induction of hypotension, (C) natriuresis and diuresis, (D) decrease in blood glucose level, (E) it is a mediator of inflammation and causes (E1) increase in vascular permeability, (E2) stimulation of nociceptors (4E3) release of other mediators of inflammation (e.g. prostaglandins), (F) it has a cardioprotective effect (directly via bradykinin action, indirectly via endothelium-derived relaxing factor action). The protein is Kininogen-1 (Kng1) of Rattus norvegicus (Rat).